The chain runs to 80 residues: MSFEVFEKLEAKVQQAIDTITLLQMEIEELKEKNNQLNQEVQQAASNREGLLRENEQLKHEQEAWQERLRALLGKMNEVN.

Residues 3–80 are a coiled coil; sequence FEVFEKLEAK…ALLGKMNEVN (78 aa).

This sequence belongs to the ZapB family. Homodimer. The ends of the coiled-coil dimer bind to each other, forming polymers. Interacts with FtsZ.

Its subcellular location is the cytoplasm. Its function is as follows. Non-essential, abundant cell division factor that is required for proper Z-ring formation. It is recruited early to the divisome by direct interaction with FtsZ, stimulating Z-ring assembly and thereby promoting cell division earlier in the cell cycle. Its recruitment to the Z-ring requires functional FtsA or ZipA. This chain is Cell division protein ZapB, found in Edwardsiella ictaluri (strain 93-146).